The sequence spans 858 residues: Volume-regulated anion channel subunit LRRC8D (858 aa).

Residues 1–22 (MFTLAEVASLNDIQPTYRILKP) are Cytoplasmic-facing. Residues 23 to 48 (WWDVFMDYLAVVMLMVAIFAGTMQLT) form a helical membrane-spanning segment. Topologically, residues 49-163 (KDQVVCLPVL…YHLALPWYSK (115 aa)) are extracellular. A disulfide bridge links C54 with C354. The segment at 118-137 (AESTFPSQETKKEKRDPTGR) is disordered. Positions 126–137 (ETKKEKRDPTGR) are enriched in basic and acidic residues. Residues 164 to 182 (YFPYLALIHTIILMVSSNF) form a helical membrane-spanning segment. The Cytoplasmic segment spans residues 183 to 308 (WFKYPKTCSK…EDSDLIYKLY (126 aa)). The interval 221 to 251 (SEENKQRITGAQTLPKHVSTSSDEGSPSAST) is disordered. The segment covering 227–251 (RITGAQTLPKHVSTSSDEGSPSAST) has biased composition (polar residues). S241, S242, and S246 each carry phosphoserine. The helical transmembrane segment at 309 to 330 (VVQTLIKTAKFIFILCYTANFV) threads the bilayer. Residues 331 to 360 (NAISFEHVCKPKVEHLTGYEVFECTHNMAY) lie on the Extracellular side of the membrane. A helical membrane pass occupies residues 361–386 (MLKKLLISYISIICVYGFICLYTLFW). Residues 387–858 (LFRIPLKEYS…DVNVPFANGI (472 aa)) are Cytoplasmic-facing. 13 LRR repeats span residues 514 to 534 (NLQE…AFSF), 538 to 559 (HLRC…VYLL), 561 to 582 (NLRE…IGLE), 589 to 609 (HLKI…ITDV), 612 to 632 (HLTK…NSLK), 636 to 657 (NVAE…IFSL), 659 to 680 (NLQE…ISFQ), 684 to 705 (RLTC…ITHV), 707 to 728 (NLES…VFSL), 730 to 751 (KLRC…IGLL), 753 to 774 (NLQH…LFKC), 776 to 797 (KLRT…ISQL), and 799 to 820 (QLTQ…LGQC).

This sequence belongs to the LRRC8 family. Heterohexamer; oligomerizes with other LRRC8 proteins (LRRC8A, LRRC8B, LRRC8C and/or LRRC8E) to form a heterohexamer. In vivo, the subunit composition may depend primarily on expression levels, and heterooligomeric channels containing various proportions of the different LRRC8 proteins may coexist.

The protein resides in the cell membrane. It localises to the endoplasmic reticulum membrane. The enzyme catalyses chloride(in) = chloride(out). It catalyses the reaction iodide(out) = iodide(in). It carries out the reaction taurine(out) = taurine(in). Non-essential component of the volume-regulated anion channel (VRAC, also named VSOAC channel), an anion channel required to maintain a constant cell volume in response to extracellular or intracellular osmotic changes. The VRAC channel conducts iodide better than chloride and can also conduct organic osmolytes like taurine. Plays a redundant role in the efflux of amino acids, such as aspartate, in response to osmotic stress. Channel activity requires LRRC8A plus at least one other family member (LRRC8B, LRRC8C, LRRC8D or LRRC8E); channel characteristics depend on the precise subunit composition. Also acts as a regulator of glucose-sensing in pancreatic beta cells: VRAC currents, generated in response to hypotonicity- or glucose-induced beta cell swelling, depolarize cells, thereby causing electrical excitation, leading to increase glucose sensitivity and insulin secretion. VRAC channels containing LRRC8D inhibit transport of immunoreactive cyclic dinucleotide GMP-AMP (2'-3'-cGAMP), an immune messenger produced in response to DNA virus in the cytosol. The protein is Volume-regulated anion channel subunit LRRC8D of Rattus norvegicus (Rat).